Reading from the N-terminus, the 156-residue chain is ATP synthase subunit b (156 aa).

A helical transmembrane segment spans residues 12-32; sequence VAFFIFVLFCMKYVWPPVIAA.

This sequence belongs to the ATPase B chain family. As to quaternary structure, F-type ATPases have 2 components, F(1) - the catalytic core - and F(0) - the membrane proton channel. F(1) has five subunits: alpha(3), beta(3), gamma(1), delta(1), epsilon(1). F(0) has three main subunits: a(1), b(2) and c(10-14). The alpha and beta chains form an alternating ring which encloses part of the gamma chain. F(1) is attached to F(0) by a central stalk formed by the gamma and epsilon chains, while a peripheral stalk is formed by the delta and b chains.

It localises to the cell inner membrane. In terms of biological role, f(1)F(0) ATP synthase produces ATP from ADP in the presence of a proton or sodium gradient. F-type ATPases consist of two structural domains, F(1) containing the extramembraneous catalytic core and F(0) containing the membrane proton channel, linked together by a central stalk and a peripheral stalk. During catalysis, ATP synthesis in the catalytic domain of F(1) is coupled via a rotary mechanism of the central stalk subunits to proton translocation. Component of the F(0) channel, it forms part of the peripheral stalk, linking F(1) to F(0). The protein is ATP synthase subunit b of Pseudomonas syringae pv. tomato (strain ATCC BAA-871 / DC3000).